The chain runs to 357 residues: Probable RNA methyltransferase Daro_1157 (357 aa).

Glu91 functions as the Proton acceptor in the catalytic mechanism. Positions 94–320 (LLPRDGLCIS…TTVRNSAGQD (227 aa)) constitute a Radical SAM core domain. An intrachain disulfide couples Cys101 to Cys325. [4Fe-4S] cluster-binding residues include Cys108, Cys112, and Cys115. S-adenosyl-L-methionine-binding positions include 153 to 154 (GE), Ser183, 206 to 208 (SLH), and Asn282. The S-methylcysteine intermediate role is filled by Cys325.

Belongs to the radical SAM superfamily. RlmN family. [4Fe-4S] cluster serves as cofactor.

It localises to the cytoplasm. The chain is Probable RNA methyltransferase Daro_1157 from Dechloromonas aromatica (strain RCB).